The sequence spans 166 residues: Large ribosomal subunit protein uL10 (166 aa).

This sequence belongs to the universal ribosomal protein uL10 family. In terms of assembly, part of the ribosomal stalk of the 50S ribosomal subunit. The N-terminus interacts with L11 and the large rRNA to form the base of the stalk. The C-terminus forms an elongated spine to which L12 dimers bind in a sequential fashion forming a multimeric L10(L12)X complex.

Forms part of the ribosomal stalk, playing a central role in the interaction of the ribosome with GTP-bound translation factors. The chain is Large ribosomal subunit protein uL10 from Streptococcus equi subsp. zooepidemicus (strain MGCS10565).